The primary structure comprises 366 residues: Spore germination protein GerM (366 aa).

2 disordered regions span residues 42–72 (TFVN…KADQ) and 346–366 (EKGE…TGSF). The segment covering 58-69 (KKTESEKSDTAK) has biased composition (basic and acidic residues). The span at 357–366 (RPSQVNTGSF) shows a compositional bias: polar residues.

Unknown. Affects both sporulation and germination. The protein is Spore germination protein GerM (gerM) of Bacillus subtilis (strain 168).